The sequence spans 660 residues: CXXC-type zinc finger protein 1 (660 aa).

Met-1 carries the N-acetylmethionine modification. Residues 1 to 14 are compositionally biased toward acidic residues; the sequence is MEGDGSDLEPPDAG. The segment at 1–20 is disordered; sequence MEGDGSDLEPPDAGDDSKSE. Phosphoserine occurs at positions 6 and 19. The PHD-type zinc-finger motif lies at 28 to 76; that stretch reads YCICRKPDINCFMIGCDNCNEWFHGDCIRITEKMAKAIREWYCRECREK. Residues 91–120 show a composition bias toward basic and acidic residues; it reads ERDGSERAGSEPRDEGGGRKRPASDPELQR. The interval 91-166 is disordered; it reads ERDGSERAGS…QQQQQQQQQI (76 aa). Ser-124 carries the phosphoserine modification. Residues 164 to 213 form a CXXC-type zinc finger; it reads QQIKRSARMCGECEACRRTEDCGHCDFCRDMKKFGGPNKIRQKCRLRQCQ. Positions 173, 176, 179, 185, 188, 191, 207, and 212 each coordinate Zn(2+). Disordered regions lie at residues 223-287 and 328-375; these read FPSS…SDED and AVKV…DPAS. Residue Ser-228 is modified to Phosphoserine. Thr-231 carries the post-translational modification Phosphothreonine. A Glycyl lysine isopeptide (Lys-Gly) (interchain with G-Cter in SUMO2) cross-link involves residue Lys-254. Residues 328-338 show a composition bias toward basic residues; the sequence is AVKVKHVKRRE. A compositionally biased stretch (basic and acidic residues) spans 339–349; the sequence is KKSEKKKEERY. Residues 350 to 362 are compositionally biased toward basic residues; it reads KRHRQKQKHKDKW. The segment covering 363 to 372 has biased composition (basic and acidic residues); sequence KHPERADAKD. A coiled-coil region spans residues 426–479; sequence AEEHGKKLLERIRREQQSARTRLQEMERRFHELEAIILRAKQQAVREDEENNEN.

Component of the SET1 complex, at least composed of the catalytic subunit (SETD1A or SETD1B), WDR5, WDR82, RBBP5, ASH2L/ASH2, CXXC1/CFP1, HCFC1 and DPY30. Interacts with SETD1A. Interacts with ZNF335. Interacts with PRDM9; this interaction does not link PRDM9-activated recombination hotspot sites with DSB machinery and is not required for the hotspot recognition pathway. Interacts with histone H3K4me3. Expressed in seminiferous tubules and in both germ cells and Sertoli cells. Highly expressed in spermatogonia, weakly expressed in leptonema and zygonema, and then again high expression in pachynema and diplonema, decreasing to undetectable levels in spermatids.

Its subcellular location is the nucleus speckle. It is found in the nucleus. In terms of biological role, transcriptional activator that exhibits a unique DNA binding specificity for CpG unmethylated motifs with a preference for CpGG. The polypeptide is CXXC-type zinc finger protein 1 (Cxxc1) (Mus musculus (Mouse)).